The sequence spans 339 residues: Centromere protein N (339 aa).

Phosphoserine is present on residues Ser-226, Ser-235, and Ser-282.

It belongs to the CENP-N/CHL4 family. In terms of assembly, component of the CENPA-NAC complex, at least composed of CENPA, CENPC, CENPH, CENPM, CENPN, CENPT and CENPU. The CENPA-NAC complex interacts with the CENPA-CAD complex, composed of CENPI, CENPK, CENPL, CENPO, CENPP, CENPQ, CENPR and CENPS. Interacts directly with CENPA. Identified in a centromere complex containing histones H2A, H2B and H4, and at least CENPA, CENPB, CENPC, CENPT, CENPN, HJURP, SUPT16H, SSRP1 and RSF1.

It localises to the nucleus. Its subcellular location is the chromosome. It is found in the centromere. The protein localises to the kinetochore. Functionally, component of the CENPA-NAC (nucleosome-associated) complex, a complex that plays a central role in assembly of kinetochore proteins, mitotic progression and chromosome segregation. The CENPA-NAC complex recruits the CENPA-CAD (nucleosome distal) complex and may be involved in incorporation of newly synthesized CENPA into centromeres. CENPN is the first protein to bind specifically to CENPA nucleosomes and the direct binding of CENPA nucleosomes by CENPN is required for centromere assembly. Required for chromosome congression and efficiently align the chromosomes on a metaphase plate. The polypeptide is Centromere protein N (CENPN) (Homo sapiens (Human)).